Here is a 1416-residue protein sequence, read N- to C-terminus: MTAPEIGCAEAIPLSKSQQNLYNGVLQDNDPALYLIGKRYRFHPLALSNFLAALEASVLNNPVQLCVLQMAATDADYPQLVPRLQFSDLVLVRSAAQGQPDGPGADLEHTWSSGILDRPLVRYTVSTDEGGNVCGLDVHTHHILLDGGATGIIEADLAHFLAASLEPAGVGQMPTLSQGLAKLAAAHLRETAKVAEALRRQADAVQRELTAEAGQGGGAQGASGTSGAAAKGVLQESIALCGPAYDALRALSEAQQVPLNVLVAAAAVAVQAGLRQSTESLLVHAVDNRFGDPELNVATCLVNSVAHALRFRPFASVREVVRDLDRGYVKAVRRRWIREEHYRRMYLAINRTSHVQALTLNFIRESCAPGLRPFLSEAPVATEIGPIEGTTVACVLDEQRHTLNLAIWDRADLPERNTGAGVAARIGAALESMAALWDQPIAMTANEWFEVGADGLPCRTEAAGRPRPPSAPAWFVDAAPGLRQFLDRRRHVYPWVGWLVCHGVVPGDVLVCTDDDTDKTVDLLLACHLAGCGYSMCESVDDLSLRATTIGEHCEGSSAHPVDVAAVRLGAVPDHALRERIDQRLDQVARDPLLATKAAYIMPTSGTTGQPKLVRISHGSLAAFCAAIGPSYGWNSRDTILQCAPLTSDISVEEIFGAAVCGAELVRSAAMKTGDLGGLARDIHALGPTVVDLPTAVWHLLCEDGDAVDVIGRSRLRQIVIGGESIRTSTVDKWVNSPVLAPISLVSSYGPTEATVVATHLPIVYDGIAAAAHTRLRVGLPMAPNTVFIAFGEVVIAGPLVSDGYLGIDDSSFGAVAPGDGSQLRAFATADRVTIDEEGFPVFAGRKDTIVKVAGKRVDTAAVARRISADPTVCDVAVEPHDGRLGVWFETERTREAAEDGATAGRIGLTLASLGVPAFFVVAVPSIPRKPNGKVDGARLHTLPQLADAVPSDAEAGESAAGLARVWSRHLGRPLAADSSLLGAGIGSLDLIRILPDTRRYLGRHLSVLELISADTAANLVCDLGSNPAAPATDGWLDAETAAAIERDLVSLGSQCTPQPLGAKPPPHDRAAAPIVVLGASGIVGTGFARAVLERKQAGLACPEIVLASRSKPPEHGPWSALRGLEGIRIEQLGATLGAADLDALICDTGARSLINCIGNTNVLVPYRGLRAANVELVSTVAQVCAQRDVRLVHLSTFVISADVTAPRVTDPRMSPYPYAASKSLAELIVAASSPALDFTIVRLPRVLGEDYQLRESADILVSVVDACMALRAFPTLTLTEEVTTGRAAAQAILGLLPQFSGAAGLGHGITVVRGAAVQYRELLSGYALDEIDAAEWKHRLDQSDWARRNPQRWSVVDAWVSLGMRLGARSYSQYLAGYPSIPLQVGTVAEIAAPPTALRALLEQGCAQPPRPALA.

The stretch at 188-215 forms a coiled coil; that stretch reads LRETAKVAEALRRQADAVQRELTAEAGQ. The Carrier domain maps to 965–1028; that stretch reads RVWSRHLGRP…NLVCDLGSNP (64 aa). O-(pantetheine 4'-phosphoryl)serine is present on S988.

Belongs to the ATP-dependent AMP-binding enzyme family. It depends on pantetheine 4'-phosphate as a cofactor.

It carries out the reaction 2 a (3R)-3-isocyanyl-fatty acyl-[ACP] + L-lysine + ATP + 2 NADPH = an isonitrile lipopeptide + 2 holo-[ACP] + AMP + diphosphate + 2 NADP(+). In terms of biological role, nonribosomal peptide synthetase (NRPS) involved in the biosynthesis of a unique class of isonitrile lipopeptides (INLPs) that seem to play a role in metal acquisition in M.marinum. Catalyzes the final step in the pathway, i.e. the condensation of a (3R)-3-isocyanyl-fatty acyl-[ACP] to both amino groups of a lysine, producing isonitrile lipopeptides. The chain is Isonitrile lipopeptide synthase from Mycobacterium marinum (strain ATCC BAA-535 / M).